The sequence spans 122 residues: Defensin-like protein 181 (122 aa).

The first 26 residues, M1–A26, serve as a signal peptide directing secretion. 8 disulfide bridges follow: C29-C70, C36-C55, C39-C64, C43-C66, C76-C122, C87-C107, C92-C116, and C96-C118.

Belongs to the DEFL family.

It is found in the secreted. Functionally, confers broad-spectrum resistance to pathogens. This Arabidopsis thaliana (Mouse-ear cress) protein is Defensin-like protein 181 (PDF3.1).